The chain runs to 218 residues: Adenylate kinase (218 aa).

Residue 10–15 (GAGKGT) participates in ATP binding. An NMP region spans residues 30–59 (STGDMFRAAMANQTEMGRLAKSFIDKGELV). AMP contacts are provided by residues Thr31, Arg36, 57 to 59 (ELV), 86 to 89 (GYPR), and Gln93. The segment at 127–165 (GRFICRSCGSTYHKVFNPTKVEGTCDVCGGHEFFQREDD) is LID. Position 128 (Arg128) interacts with ATP. Residues Cys131 and Cys134 each contribute to the Zn(2+) site. 137 to 138 (TY) contacts ATP. 2 residues coordinate Zn(2+): Cys151 and Cys154. AMP is bound by residues Arg162 and Arg173. Gln201 is a binding site for ATP.

It belongs to the adenylate kinase family. Monomer.

It is found in the cytoplasm. The enzyme catalyses AMP + ATP = 2 ADP. It functions in the pathway purine metabolism; AMP biosynthesis via salvage pathway; AMP from ADP: step 1/1. Its function is as follows. Catalyzes the reversible transfer of the terminal phosphate group between ATP and AMP. Plays an important role in cellular energy homeostasis and in adenine nucleotide metabolism. The polypeptide is Adenylate kinase (Streptococcus thermophilus (strain CNRZ 1066)).